Here is a 201-residue protein sequence, read N- to C-terminus: Probable GTP-binding protein EngB (201 aa).

One can recognise an EngB-type G domain in the interval 22–197; it reads TFPEYAFIGR…LNYIESINKE (176 aa). GTP contacts are provided by residues 30–37, 57–61, 75–78, 142–145, and 175–178; these read GRSNVGKS, GKTML, DLPG, TKAD, and ITSS. Residues serine 37 and threonine 59 each coordinate Mg(2+).

The protein belongs to the TRAFAC class TrmE-Era-EngA-EngB-Septin-like GTPase superfamily. EngB GTPase family. It depends on Mg(2+) as a cofactor.

Functionally, necessary for normal cell division and for the maintenance of normal septation. This is Probable GTP-binding protein EngB from Bacteroides fragilis (strain ATCC 25285 / DSM 2151 / CCUG 4856 / JCM 11019 / LMG 10263 / NCTC 9343 / Onslow / VPI 2553 / EN-2).